The primary structure comprises 43 residues: Protein PsbN (43 aa).

Residues 7–27 (VAIFISCLLVSFTGYALYTAF) traverse the membrane as a helical segment.

The protein belongs to the PsbN family.

The protein localises to the plastid. It localises to the chloroplast thylakoid membrane. Functionally, may play a role in photosystem I and II biogenesis. The polypeptide is Protein PsbN (Zygnema circumcarinatum (Green alga)).